The primary structure comprises 217 residues: Somatotropin (217 aa).

The signal sequence occupies residues 1–27; the sequence is MMAAGPRTSLLLAFTLLCLPWTQVVGA. Zn(2+) is bound at residue His46. A disulfide bond links Cys79 and Cys190. Phosphoserine is present on Ser132. Glu199 serves as a coordination point for Zn(2+). A disulfide bridge connects residues Cys207 and Cys215.

It belongs to the somatotropin/prolactin family.

The protein localises to the secreted. In terms of biological role, plays an important role in growth control. Its major role in stimulating body growth is to stimulate the liver and other tissues to secrete IGF1. It stimulates both the differentiation and proliferation of myoblasts. It also stimulates amino acid uptake and protein synthesis in muscle and other tissues. This chain is Somatotropin (GH1), found in Capra hircus (Goat).